The following is a 341-amino-acid chain: MLVLGLETSCDETGVALYDSRRGLLADALFSQIDLHRIYGGVVPELASRDHVKRMLPLLRQVLDESGCRTGDIDGIAYTAGPGLVGALLVGASCAQALALAWGVPALGVHHMEGHLLAPMLEEQPPQFPFVALLVSGGHTQLVRVDGIGRYQVLGESLDDAAGEAFDKTAKLLGLGYPGGPEIARLAQDGRPGRFVFPRPMTDRPGLEFSFSGLKTFALNTWQHCRASGDDGEQSRRDIALAFQQAVVETLIIKCRRALKQTGLKRLVIAGGVSANQALRSALERMLGELDGQVFYARPRFCTDNGAMIAYAGCQRLLAGQRDGPAIQVHARWPMETLPAL.

2 residues coordinate Fe cation: His111 and His115. Residues 134–138, Asp167, Gly180, and Asn276 each bind substrate; that span reads LVSGG. A Fe cation-binding site is contributed by Asp304.

This sequence belongs to the KAE1 / TsaD family. The cofactor is Fe(2+).

It localises to the cytoplasm. It carries out the reaction L-threonylcarbamoyladenylate + adenosine(37) in tRNA = N(6)-L-threonylcarbamoyladenosine(37) in tRNA + AMP + H(+). In terms of biological role, required for the formation of a threonylcarbamoyl group on adenosine at position 37 (t(6)A37) in tRNAs that read codons beginning with adenine. Is involved in the transfer of the threonylcarbamoyl moiety of threonylcarbamoyl-AMP (TC-AMP) to the N6 group of A37, together with TsaE and TsaB. TsaD likely plays a direct catalytic role in this reaction. This chain is tRNA N6-adenosine threonylcarbamoyltransferase, found in Azotobacter vinelandii (strain DJ / ATCC BAA-1303).